We begin with the raw amino-acid sequence, 1167 residues long: ATP-dependent helicase/deoxyribonuclease subunit B (1167 aa).

One can recognise a UvrD-like helicase ATP-binding domain in the interval 1–359; sequence MSLRFLLGRS…IRQTEAYRDL (359 aa). 8 to 15 contacts ATP; the sequence is GRSGSGKT. The UvrD-like helicase C-terminal domain occupies 282 to 588; sequence VNRRHQDKAL…EFALVPPAID (307 aa). Residues cysteine 803, cysteine 1125, cysteine 1128, and cysteine 1134 each contribute to the [4Fe-4S] cluster site.

The protein belongs to the helicase family. AddB/RexB type 1 subfamily. Heterodimer of AddA and AddB. Mg(2+) is required as a cofactor. It depends on [4Fe-4S] cluster as a cofactor.

The heterodimer acts as both an ATP-dependent DNA helicase and an ATP-dependent, dual-direction single-stranded exonuclease. Recognizes the chi site generating a DNA molecule suitable for the initiation of homologous recombination. The AddB subunit has 5' -&gt; 3' nuclease activity but not helicase activity. This Geobacillus thermodenitrificans (strain NG80-2) protein is ATP-dependent helicase/deoxyribonuclease subunit B.